Here is a 547-residue protein sequence, read N- to C-terminus: MPSVALNSPRLPRVFVVGVGMTKFMKPGGENSRDYPDLAKEAGQKALADRQIPYSAVEQACVGYVYGESTCGQRAIYHSLGLTGIPIINVNNNCSTGSTALFMAQQLVQGGLANCVLALGFEKMEKGSLGTKYSDRSNPLEKHIDVLINKYGMSACPFAPQLFGSAGKEHMETYGTKVEHFAKIGWKNHKHSVNNPYSQFQDEYSLDEIMKSRPVFDFLTVLQCCPTSDGAAAAIVSSEEFVQKHGLQSKAVEIVAQEMVTDMPSTFEEKSVIKMVGYDMSKEAARKCYEKSGLGPSDVDVIELHDCFSTNELLTYEALGLCPEGQGGALVDRGDNTYGGKWVINPSGGLISKGHPLGATGLAQCAELCWQLRGEAGKRQVPGAKVALQHNLGLGGAAVVTLYRMGFPEAASSFRTHQISAAPTSSAGDGFKANLIFKEIEKKLEEEGEEFVKKIGGIFAFKVKDGPGGKEATWVVDVKNGKGSVLPDSDKKADCTITMADSDLLALMTGKMNPQSAFFQGKLKIAGNMGLAMKLQSLQLQPDKAKL.

Phosphoserine is present on residues S3 and S8. At K40 the chain carries N6-succinyllysine. K132 bears the N6-acetyllysine; alternate mark. K132 is modified (N6-succinyllysine; alternate). Position 168 is an N6-succinyllysine (K168). K177 carries the N6-acetyllysine modification. K183 carries the post-translational modification N6-acetyllysine; alternate. The residue at position 183 (K183) is an N6-succinyllysine; alternate. 2 positions are modified to N6-succinyllysine: K211 and K282. N6-acetyllysine; alternate occurs at positions 341, 432, 438, 443, and 453. An N6-succinyllysine; alternate mark is found at K341, K432, K438, K443, and K453. One can recognise an SCP2 domain in the interval 433–543; sequence ANLIFKEIEK…KLQSLQLQPD (111 aa). An N6-succinyllysine modification is found at K464. K470 carries the N6-acetyllysine; alternate modification. At K470 the chain carries N6-succinyllysine; alternate. K479 is subject to N6-succinyllysine. K491 is subject to N6-acetyllysine. 2 positions are modified to N6-succinyllysine: K492 and K511. At S516 the chain carries Phosphoserine. K522 and K534 each carry N6-succinyllysine. At S537 the chain carries Phosphoserine. Position 544 is an N6-succinyllysine (K544). Positions 545 to 547 match the Microbody targeting signal motif; it reads AKL.

It in the N-terminal section; belongs to the thiolase-like superfamily. Thiolase family. Interacts with PEX5; the interaction is essential for peroxisomal import. Post-translationally, preSCP2, a protein with a molecular mass of about 15 kDa, is processed into its mature form (SCP2) by proteolytic cleavage of a 20 residue leader sequence after translocation into peroxisomes. In terms of tissue distribution, liver &gt; intestine &gt; brain &gt; lung, colon, stomach, spleen, kidney, heart and ovary. As to expression, expressed in liver (at protein level).

The protein localises to the peroxisome. It is found in the cytoplasm. It localises to the mitochondrion. The catalysed reaction is an acyl-CoA + acetyl-CoA = a 3-oxoacyl-CoA + CoA. The enzyme catalyses choloyl-CoA + propanoyl-CoA = 3alpha,7alpha,12alpha-trihydroxy-24-oxo-5beta-cholestan-26-oyl-CoA + CoA. It carries out the reaction 4,8,12-trimethyltridecanoyl-CoA + propanoyl-CoA = 3-oxopristanoyl-CoA + CoA. It catalyses the reaction hexanoyl-CoA + acetyl-CoA = 3-oxooctanoyl-CoA + CoA. The catalysed reaction is tetradecanoyl-CoA + acetyl-CoA = 3-oxohexadecanoyl-CoA + CoA. The enzyme catalyses 3-oxohexadecanedioyl-CoA + CoA = tetradecanedioyl-CoA + acetyl-CoA. It carries out the reaction propanoyl-CoA + tetradecanoyl-CoA = 3-oxo-2-methylhexadecanoyl-CoA + CoA. It catalyses the reaction butanoyl-CoA + acetyl-CoA = 3-oxohexanoyl-CoA + CoA. The catalysed reaction is octanoyl-CoA + acetyl-CoA = 3-oxodecanoyl-CoA + CoA. The enzyme catalyses decanoyl-CoA + acetyl-CoA = 3-oxododecanoyl-CoA + CoA. It carries out the reaction dodecanoyl-CoA + acetyl-CoA = 3-oxotetradecanoyl-CoA + CoA. It catalyses the reaction hexadecanoyl-CoA + acetyl-CoA = 3-oxooctadecanoyl-CoA + CoA. The catalysed reaction is 3-oxo-(9Z-octadecenoyl)-CoA + CoA = (7Z)-hexadecenoyl-CoA + acetyl-CoA. The enzyme catalyses 7-dehydrocholesterol(in) = 7-dehydrocholesterol(out). Plays a crucial role in the peroxisomal oxidation of branched-chain fatty acids. Catalyzes the last step of the peroxisomal beta-oxidation of branched chain fatty acids and the side chain of the bile acid intermediates di- and trihydroxycoprostanic acids (DHCA and THCA). Also active with medium and long straight chain 3-oxoacyl-CoAs. Stimulates the microsomal conversion of 7-dehydrocholesterol to cholesterol and transfers phosphatidylcholine and 7-dehydrocholesterol between membrances, in vitro. Isoforms SCP2 and SCPx cooperate in peroxisomal oxidation of certain naturally occurring tetramethyl-branched fatty acyl-CoAs. In terms of biological role, mediates the transfer of all common phospholipids, cholesterol and gangliosides from the endoplasmic reticulum to the plasma membrane. May play a role in regulating steroidogenesis. Stimulates the microsomal conversion of 7-dehydrocholesterol to cholesterol. Also binds fatty acids and fatty acyl Coenzyme A (CoA) such as phytanoyl-CoA. Involved in the regulation phospholipid synthesis in endoplasmic reticulum enhancing the incorporation of exogenous fatty acid into glycerides. Seems to stimulate the rate-limiting step in phosphatidic acid formation mediated by GPAT3. Isoforms SCP2 and SCPx cooperate in peroxisomal oxidation of certain naturally occurring tetramethyl-branched fatty acyl-CoAs. The polypeptide is Sterol carrier protein 2 (Rattus norvegicus (Rat)).